The sequence spans 428 residues: Dihydroorotase (428 aa).

Residues H59 and H61 each coordinate Zn(2+). Substrate-binding positions include 61–63 (HLR) and N93. Positions 151, 178, and 231 each coordinate Zn(2+). Position 277 (N277) interacts with substrate. D304 is a Zn(2+) binding site. Residue D304 is part of the active site. Residues H308 and 322–323 (FG) contribute to the substrate site.

This sequence belongs to the metallo-dependent hydrolases superfamily. DHOase family. Class I DHOase subfamily. It depends on Zn(2+) as a cofactor.

It carries out the reaction (S)-dihydroorotate + H2O = N-carbamoyl-L-aspartate + H(+). It participates in pyrimidine metabolism; UMP biosynthesis via de novo pathway; (S)-dihydroorotate from bicarbonate: step 3/3. In terms of biological role, catalyzes the reversible cyclization of carbamoyl aspartate to dihydroorotate. The sequence is that of Dihydroorotase from Bacillus pumilus (strain SAFR-032).